Reading from the N-terminus, the 173-residue chain is Gamma-crystallin S-2 (173 aa).

Beta/gamma crystallin 'Greek key' domains are found at residues 2-40 (GKII…RVES) and 41-83 (DWWV…RVPT). The connecting peptide stretch occupies residues 84–88 (HTQRP). Beta/gamma crystallin 'Greek key' domains follow at residues 89 to 129 (YRMR…HVMG) and 130 to 172 (AYWI…RRIM).

Belongs to the beta/gamma-crystallin family.

Functionally, crystallins are the dominant structural components of the vertebrate eye lens. This chain is Gamma-crystallin S-2 (GS-2), found in Chiloscyllium indicum (Slender bamboo shark).